A 294-amino-acid chain; its full sequence is uncharacterized protein (294 aa).

Positions 1–19 are cleaved as a signal peptide; sequence MFKRSLFILLLLAASLVKA.

This is an uncharacterized protein from Rickettsia felis (strain ATCC VR-1525 / URRWXCal2) (Rickettsia azadi).